Here is a 142-residue protein sequence, read N- to C-terminus: Large ribosomal subunit protein uL13 (142 aa).

Belongs to the universal ribosomal protein uL13 family. As to quaternary structure, part of the 50S ribosomal subunit.

This protein is one of the early assembly proteins of the 50S ribosomal subunit, although it is not seen to bind rRNA by itself. It is important during the early stages of 50S assembly. The chain is Large ribosomal subunit protein uL13 from Buchnera aphidicola subsp. Schizaphis graminum (strain Sg).